Reading from the N-terminus, the 471-residue chain is Protein hedgehog (471 aa).

The N-palmitoyl cysteine moiety is linked to residue Cys85. Ca(2+) contacts are provided by Glu149, Glu150, Asp155, Thr185, Glu186, Asp189, and Asp191. Residue Gly257 is the site of Cholesterol glycine ester attachment.

Belongs to the hedgehog family. As to quaternary structure, interacts with shf. Interacts with ptc and CG5504/l(2)tid. Post-translationally, the C-terminal part of the hedgehog protein precursor displays an autoproteolysis activity that results in the cleavage of the full-length protein into two parts (N-product and C-product). In addition, the C-terminal part displays a cholesterol transferase activity that results by the covalent attachment of a cholesterol moiety to the C-terminal of the newly generated N-product. The N-product is the active species in both local and long-range signaling, whereas the C-product has no signaling activity. Cholesterylation is required for N-product targeting to lipid rafts and multimerization. In terms of processing, N-palmitoylation by Rasp of the hedgehog N-product, within the secretory pathway, is required for the embryonic and larval patterning activities of the hedgehog signal. As to expression, in embryos, expression starts at stage 5 as a few stripes at the anterior and posterior ends, this expands to 17 stripes during stages 8-11. Expression is also seen in CNS and some PNS cells until stage 13-14, and in foregut, hindgut and salivary glands. In larvae, expression is seen in the posterior compartment of the wing, leg and antennal imaginal disks. In adults, high level of expression in specific regions of the proventriculus and hindgut, with slightly lower levels of expression in the posterior midgut. Relatively low levels of expression in the anterior midgut region.

The protein resides in the nucleus. Its subcellular location is the cytoplasm. The protein localises to the cell membrane. The catalysed reaction is glycyl-L-cysteinyl-[protein] + cholesterol + H(+) = [protein]-C-terminal glycyl cholesterol ester + N-terminal L-cysteinyl-[protein]. Its function is as follows. The C-terminal part of the hedgehog protein precursor displays an autoproteolysis activity that results in the cleavage of the full-length protein into two parts (N-product and C-product). In addition, the C-terminal part displays a cholesterol transferase activity that results by the covalent attachment of a cholesterol moiety to the C-terminal of the newly generated N-product. Once cleaved, the C-product has no signaling activity and diffuses from the cell. In terms of biological role, the dually lipidated hedgehog protein N-product is a morphogen which is essential for a variety of patterning events during development. Establishes the anterior-posterior axis of the embryonic segments and patterns the larval imaginal disks. Binds to the patched (ptc) receptor, which functions in association with smoothened (smo), to activate the transcription of target genes wingless (wg), decapentaplegic (dpp) and ptc. In the absence of hh, ptc represses the constitutive signaling activity of smo through fused (fu). Essential component of a signaling pathway which regulates the Duox-dependent gut immune response to bacterial uracil; required to activate Cad99C-dependent endosome formation, norpA-dependent Ca2+ mobilization and p38 MAPK, which are essential steps in the Duox-dependent production of reactive oxygen species (ROS) in response to intestinal bacterial infection. During photoreceptor differentiation, it up-regulates transcription of Ubr3, which in turn promotes the hh-signaling pathway by mediating the ubiquitination and degradation of cos. The sequence is that of Protein hedgehog from Drosophila melanogaster (Fruit fly).